The primary structure comprises 497 residues: Glutathione hydrolase 6 (497 aa).

Residues 1–34 are disordered; it reads MDATTGPVHYHKLQLWEPGVESEEEEEEEEEEIA. Residues 1–51 lie on the Cytoplasmic side of the membrane; sequence MDATTGPVHYHKLQLWEPGVESEEEEEEEEEEIAEPLVLSLRRLQNTPRNE. The segment covering 20–34 has biased composition (acidic residues); sequence VESEEEEEEEEEEIA. Residues 52–72 form a helical; Signal-anchor for type II membrane protein membrane-spanning segment; it reads VGGLPGAWARLLAGLLLLAVS. The Extracellular segment spans residues 73 to 497; that stretch reads SSLALRQLHS…PSGCCPFQGY (425 aa). N-linked (GlcNAc...) asparagine glycosylation is found at asparagine 164, asparagine 169, asparagine 367, and asparagine 378.

This sequence belongs to the gamma-glutamyltransferase family. In terms of assembly, heterodimer composed of the light and heavy chains. The active site is located in the light chain. Cleaved by autocatalysis into a large and a small subunit and the autocatalytic cleavage is essential to the functional activation of the enzyme.

It is found in the membrane. The catalysed reaction is an N-terminal (5-L-glutamyl)-[peptide] + an alpha-amino acid = 5-L-glutamyl amino acid + an N-terminal L-alpha-aminoacyl-[peptide]. The enzyme catalyses glutathione + H2O = L-cysteinylglycine + L-glutamate. It catalyses the reaction an S-substituted glutathione + H2O = an S-substituted L-cysteinylglycine + L-glutamate. It participates in sulfur metabolism; glutathione metabolism. Its function is as follows. Hydrolyzes and transfers gamma-glutamyl moieties from glutathione and other gamma-glutamyl compounds to acceptors. The chain is Glutathione hydrolase 6 from Mus musculus (Mouse).